We begin with the raw amino-acid sequence, 1372 residues long: MTESEQIVYISCIEEVRYSFVSHLSKALQRKGVNDVFIDSDDSLSNESQSMVERARVSVMILPGNRTVSLDKLVKVLDCQKNKDQVVVPVLYGVRSSETEWLSALDSKGFSSVHHSRKECSDSQLVKETVRDVYEKLFYMERIGIYSKLLEIEKMINKQPLDIRCVGIWGMPGIGKTTLAKAVFDQMSGEFDAHCFIEDYTKAIQEKGVYCLLEEQFLKENAGASGTVTKLSLLRDRLNNKRVLVVLDDVRSPLVVESFLGGFDWFGPKSLIIITSKDKSVFRLCRVNQIYEVQGLNEKEALQLFSLCASIDDMAEQNLHEVSMKVIKYANGHPLALNLYGRELMGKKRPPEMEIAFLKLKECPPAIFVDAIKSSYDTLNDREKNIFLDIACFFQGENVDYVMQLLEGCGFFPHVGIDVLVEKSLVTISENRVRMHNLIQDVGRQIINRETRQTKRRSRLWEPCSIKYLLEDKEQNENEEQKTTFERAQVPEEIEGMFLDTSNLSFDIKHVAFDNMLNLRLFKIYSSNPEVHHVNNFLKGSLSSLPNVLRLLHWENYPLQFLPQNFDPIHLVEINMPYSQLKKLWGGTKDLEMLKTIRLCHSQQLVDIDDLLKAQNLEVVDLQGCTRLQSFPATGQLLHLRVVNLSGCTEIKSFPEIPPNIETLNLQGTGIIELPLSIVKPNYRELLNLLAEIPGLSGVSNLEQSDLKPLTSLMKISTSYQNPGKLSCLELNDCSRLRSLPNMVNLELLKALDLSGCSELETIQGFPRNLKELYLVGTAVRQVPQLPQSLEFFNAHGCVSLKSIRLDFKKLPVHYTFSNCFDLSPQVVNDFLVQAMANVIAKHIPRERHVTGFSQKTVQRSSRDSQQELNKTLAFSFCAPSHANQNSKLDLQPGSSSMTRLDPSWRNTLVGFAMLVQVAFSEGYCDDTDFGISCVCKWKNKEGHSHRREINLHCWALGKAVERDHTFVFFDVNMRPDTDEGNDPDIWADLVVFEFFPVNKQRKPLNDSCTVTRCGVRLITAVNCNTSIENISPVLSLDPMEVSGNEDEEVLRVRYAGLQEIYKALFLYIAGLFNDEDVGLVAPLIANIIDMDVSYGLKVLAYRSLIRVSSNGEIVMHYLLRQMGKEILHTESKKTDKLVDNIQSSMIATKEIEITRSKSRRKNNKEKRVVCVVDRGSRSSDLWVWRKYGQKPIKSSPYPRSYYRCASSKGCFARKQVERSRTDPNVSVITYISEHNHPFPTLRNTLAGSTRSSSSKCSDVTTSASSTVSQDKEGPDKSHLPSSPASPPYAAMVVKEEDMEQWDNMEFDVDVEEDTFIPELFPEDTFADMDKLEENSQTMFLSRRSSGGNMEAQGKNSSDDREVNLPSKILNR.

Residues 2 to 137 enclose the TIR domain; the sequence is TESEQIVYIS…ETVRDVYEKL (136 aa). The NB-ARC domain maps to 166–417; sequence VGIWGMPGIG…GCGFFPHVGI (252 aa). 170-177 is an ATP binding site; sequence GMPGIGKT. Residues 491–515 form an LRR 1 repeat; the sequence is PEEIEGMFLDTSNLSFDIKHVAFDN. The stretch at 528 to 544 is one LRR 2; degenerate repeat; that stretch reads NPEVHHVNNFLKGSLSS. 10 LRR repeats span residues 545-568, 570-591, 614-637, 638-658, 659-681, 693-718, 723-747, 749-767, 768-792, and 798-823; these read LPNV…NFDP, HLVE…TKDL, AQNL…TGQL, LHLR…PEIP, PNIE…IVKP, IPGL…KIST, PGKL…VNLE, LKAL…QGFP, RNLK…SLEF, and CVSL…CFDL. Positions 950-964 match the Nuclear localization signal motif; the sequence is INLHCWALGKAVERD. Residues 1174 to 1240 constitute a DNA-binding region (WRKY); that stretch reads DRGSRSSDLW…YISEHNHPFP (67 aa). 2 disordered regions span residues 1246 to 1288 and 1337 to 1372; these read LAGS…ASPP and QTMF…ILNR. The span at 1249–1269 shows a compositional bias: low complexity; it reads STRSSSSKCSDVTTSASSTVS. Residues 1270–1279 are compositionally biased toward basic and acidic residues; the sequence is QDKEGPDKSH. Residues 1337-1348 show a composition bias toward polar residues; that stretch reads QTMFLSRRSSGG.

It belongs to the disease resistance TIR-NB-LRR family. Interacts with RPS4B. RPS4B-RRS1B heterodimer interacts with the bacterial effectors AvrRps4 and PopP2.

It is found in the nucleus. Transcription factor. Interacts specifically with the W box (5'-(T)TGAC[CT]-3'), a frequently occurring elicitor-responsive cis-acting element. Also acts as a disease resistance protein that specifically recognizes the AvrRps4 type III effector avirulence protein from P.syringae. Heterodimerization with RPS4B is required to form a functional complex to recognize AvrRps4 and to mediate the hypersensitive response. This Arabidopsis thaliana (Mouse-ear cress) protein is Disease resistance protein RRS1B.